The sequence spans 133 residues: DNA-directed RNA polymerase subunit omega (133 aa).

Belongs to the RNA polymerase subunit omega family. In terms of assembly, the RNAP catalytic core consists of 2 alpha, 1 beta, 1 beta' and 1 omega subunit. When a sigma factor is associated with the core the holoenzyme is formed, which can initiate transcription.

The enzyme catalyses RNA(n) + a ribonucleoside 5'-triphosphate = RNA(n+1) + diphosphate. Its function is as follows. Promotes RNA polymerase assembly. Latches the N- and C-terminal regions of the beta' subunit thereby facilitating its interaction with the beta and alpha subunits. This is DNA-directed RNA polymerase subunit omega from Brucella canis (strain ATCC 23365 / NCTC 10854 / RM-666).